Reading from the N-terminus, the 533-residue chain is Conglutin beta 2 (533 aa).

Positions 1-30 (MGKMRVRFPTLVLVLGIVFLMAVSIGIAYG) are cleaved as a signal peptide. The propeptide occupies 31 to 108 (EKDVLKSHER…EQQQGSPSYS (78 aa)). Basic and acidic residues-rich tracts occupy residues 37–51 (SHERPEEREQEEWQP) and 79–99 (SGYERRQYHERSEQREEREQE). Disordered stretches follow at residues 37–123 (SHER…QRFQ) and 315–337 (KHAQSSSGKDKPSDSGPFNLRSN). 2 consecutive Cupin type-1 domains span residues 115 to 273 (YHFS…EEIQ) and 332 to 494 (FNLR…EDIE). N-linked (GlcNAc...) asparagine glycans are attached at residues N363 and N444. Residues 503 to 533 (SYFANGQPQQQQQQQSEKEGRRGRRGSSLPF) are disordered.

This sequence belongs to the 7S seed storage protein family. As to quaternary structure, multimers. Give rise to a complex array of processed forms, due to a large number of processing sites and changes in glycosylation.

Its function is as follows. Seed storage protein. Accumulates during seed development and is hydrolyzed after germination to provide a carbon and nitrogen source for the developing seedling. Functionally, has a lectin-like activity. This Lupinus albus (White lupine) protein is Conglutin beta 2.